Here is a 315-residue protein sequence, read N- to C-terminus: Protein rlx (315 aa).

A disordered region spans residues 263-315 (TEQLKQRRVERAQETKQAHSKISSRDTRESENQRERAKGNNIRIERGDEGLSR).

Functionally, this protein is probably required for relaxation complex formation and plasmid mobilization by conjugative plasmids. The protein is Protein rlx (rlx) of Staphylococcus aureus.